The sequence spans 147 residues: Hemoglobin subunit beta (147 aa).

The region spanning 3 to 147 is the Globin domain; it reads EWTDKERTII…VVSALGKQYH (145 aa). Positions 64 and 93 each coordinate heme b.

This sequence belongs to the globin family. In terms of assembly, heterotetramer of two alpha chains and two beta chains. Red blood cells.

Involved in oxygen transport from gills to the various peripheral tissues. The protein is Hemoglobin subunit beta of Trematomus newnesi (Dusky notothen).